Here is a 540-residue protein sequence, read N- to C-terminus: IQ motif and ankyrin repeat domain-containing protein 1 (540 aa).

The span at 1 to 17 shows a compositional bias: low complexity; that stretch reads MSTKKGGPKAASGKGQA. Residues 1-62 form a disordered region; the sequence is MSTKKGGPKA…PQAPAAPTAE (62 aa). Residues 62 to 91 form the IQ domain; the sequence is EDKAAIVIQCAFRQYLARRELARRCQERQE. ANK repeat units follow at residues 191–220 and 224–253; these read HGNTPLSEAAAGGQTMAIQLLAELGANPNT and FGRTPLYRAAFGGHLEAVEELLKIGADPRM. A coiled-coil region spans residues 281-388; sequence LTEAMLKNME…EETLAMARLE (108 aa).

This chain is IQ motif and ankyrin repeat domain-containing protein 1, found in Mus musculus (Mouse).